A 1400-amino-acid chain; its full sequence is ABC transporter G family member 30 (1400 aa).

The N-linked (GlcNAc...) asparagine glycan is linked to Asn116. Positions 141–414 (LLSEFICSKK…FEEFGFKCPE (274 aa)) constitute an ABC transporter 1 domain. 174 to 181 (GPPGCGKT) lines the ATP pocket. N-linked (GlcNAc...) asparagine glycosylation is present at Asn472. An ABC transmembrane type-2 1 domain is found at 492–704 (EMLKACSRRE…AEIGLTANEF (213 aa)). 7 helical membrane-spanning segments follow: residues 510 to 530 (FIYL…MTVF), 553 to 573 (LFRL…RLGV), 582 to 602 (FYPA…LSVL), 628 to 648 (FLIL…IAAI), 652 to 672 (IIAS…FGGF), 679 to 699 (MPAW…EIGL), and 738 to 758 (TAFG…VLAL). Residues 808 to 1053 (VTFQNVQYYI…VIEYFESFSG (246 aa)) form the ABC transporter 2 domain. 845-852 (GVSGAGKT) lines the ATP pocket. Residues Asn899 and Asn1040 are each glycosylated (N-linked (GlcNAc...) asparagine). The 215-residue stretch at 1125-1339 (VQLKACLWKQ…VLEGLLSSQY (215 aa)) folds into the ABC transmembrane type-2 2 domain. 7 consecutive transmembrane segments (helical) span residues 1144–1164 (HNIT…LLFW), 1179–1199 (IFGS…AAVI), 1228–1248 (VLIE…IVYP), 1263–1283 (LYSI…MVAL), 1289–1309 (MAVT…GFVI), 1317–1337 (WWIW…LLSS), and 1372–1392 (VVAF…AFFM).

It belongs to the ABC transporter superfamily. ABCG family. PDR (TC 3.A.1.205) subfamily. In terms of tissue distribution, confined to roots. In seeds, mainly expressed in the embryo and, to a lesser extent, in the endosperm.

The protein localises to the cell membrane. The catalysed reaction is abscisate(out) + ATP + H2O = abscisate(in) + ADP + phosphate + H(+). Its function is as follows. Together with ABCG40, import into the embryo the abscisic acid (ABA) delivered from the endosperm via ABCG25 and ABCG31-mediated export to suppress radicle extension and subsequent embryonic growth. Involved in root secretion of phytochemicals (phenolics and sugars) which regulate soil microbiota, influencing both fungal and bacterial communities. May be a general defense protein. This chain is ABC transporter G family member 30, found in Arabidopsis thaliana (Mouse-ear cress).